The primary structure comprises 491 residues: Protein DETOXIFICATION 20 (491 aa).

12 helical membrane-spanning segments follow: residues 37-57 (LWVV…VSMV), 75-95 (ITFT…AGAL), 120-140 (IVLT…GPIL), 156-176 (LALW…CQMF), 185-205 (IISY…WLLV), 214-234 (GAMT…LLYV), 265-285 (GGML…TGNL), 296-316 (AICI…LAAV), 337-357 (LIAV…FLFL), 381-401 (LLAF…VAIG), 413-433 (LACY…VVGL), and 438-458 (VWIG…VMTL).

This sequence belongs to the multi antimicrobial extrusion (MATE) (TC 2.A.66.1) family.

The protein resides in the membrane. The sequence is that of Protein DETOXIFICATION 20 from Arabidopsis thaliana (Mouse-ear cress).